Here is a 294-residue protein sequence, read N- to C-terminus: HTH-type transcriptional regulator ClcR (294 aa).

The 58-residue stretch at 1 to 58 folds into the HTH lysR-type domain; sequence MEFRQLRYFIAVAEEGNIGAAARRLHISQPPITRQIQALEQDLGVVLFERTHRGVELT. Residues 18–37 constitute a DNA-binding region (H-T-H motif); that stretch reads IGAAARRLHISQPPITRQIQ.

Belongs to the LysR transcriptional regulatory family.

It localises to the cytoplasm. In terms of biological role, involved in regulation of chlorinated catechol metabolism. Transcriptional activator of the clcABD chlorocatechol oxidative operon. The polypeptide is HTH-type transcriptional regulator ClcR (clcR) (Pseudomonas putida (Arthrobacter siderocapsulatus)).